A 393-amino-acid polypeptide reads, in one-letter code: NAD(P)H-quinone oxidoreductase subunit H, chloroplastic (393 aa).

The protein belongs to the complex I 49 kDa subunit family. In terms of assembly, NDH is composed of at least 16 different subunits, 5 of which are encoded in the nucleus.

It is found in the plastid. Its subcellular location is the chloroplast thylakoid membrane. The enzyme catalyses a plastoquinone + NADH + (n+1) H(+)(in) = a plastoquinol + NAD(+) + n H(+)(out). The catalysed reaction is a plastoquinone + NADPH + (n+1) H(+)(in) = a plastoquinol + NADP(+) + n H(+)(out). NDH shuttles electrons from NAD(P)H:plastoquinone, via FMN and iron-sulfur (Fe-S) centers, to quinones in the photosynthetic chain and possibly in a chloroplast respiratory chain. The immediate electron acceptor for the enzyme in this species is believed to be plastoquinone. Couples the redox reaction to proton translocation, and thus conserves the redox energy in a proton gradient. In Cucumis sativus (Cucumber), this protein is NAD(P)H-quinone oxidoreductase subunit H, chloroplastic.